Consider the following 150-residue polypeptide: Ribosome maturation factor RimP (150 aa).

The protein belongs to the RimP family.

Its subcellular location is the cytoplasm. In terms of biological role, required for maturation of 30S ribosomal subunits. The chain is Ribosome maturation factor RimP from Klebsiella pneumoniae (strain 342).